The sequence spans 301 residues: Securin (301 aa).

Disordered stretches follow at residues 1 to 55 (MLPR…RTVL), 82 to 120 (DSPT…DTPL), and 218 to 284 (ASDQ…RSIH). Positions 33–36 (RAPL) match the D-box 1 motif. Polar residues predominate over residues 38–50 (STKQSNAPSSVTV). The D-box 2 motif lies at 52–55 (RTVL). 3 stretches are compositionally biased toward polar residues: residues 88–98 (EPNSQGISRSA), 110–119 (PRRSSLTDTP), and 231–245 (VSKQ…STVY). 2 consecutive repeats follow at residues 250 to 260 (ASGKSIPRPLS) and 270 to 280 (ASGNSRRRPLS).

Belongs to the securin family. In terms of assembly, interacts with the caspase-like cut1, and prevents its protease activity probably by covering its active site. Post-translationally, ubiquitinated by the anaphase promoting complex (APC) at the onset of anaphase, conducting to its degradation.

The protein resides in the cytoplasm. It is found in the nucleus. Functionally, regulatory protein, which plays a central role in chromosome stability. Probably acts by blocking the action of key proteins. During the mitosis, it blocks separase/cut1 function, preventing the proteolysis of the cohesin complex and the subsequent segregation of the chromosomes. At the onset of anaphase, it is ubiquitinated, conducting to its destruction and to the liberation of cut1. The polypeptide is Securin (cut2) (Schizosaccharomyces pombe (strain 972 / ATCC 24843) (Fission yeast)).